We begin with the raw amino-acid sequence, 225 residues long: Probable 3-keto-L-gulonate-6-phosphate decarboxylase (225 aa).

Aspartate 11 contacts substrate. Residues glutamate 33 and aspartate 62 each contribute to the Mg(2+) site. Arginine 202 is a substrate binding site.

This sequence belongs to the HPS/KGPDC family. KGPDC subfamily. As to quaternary structure, homodimer. Mg(2+) is required as a cofactor.

The catalysed reaction is 3-dehydro-L-gulonate 6-phosphate + H(+) = L-xylulose 5-phosphate + CO2. In terms of biological role, catalyzes the decarboxylation of 3-keto-L-gulonate-6-P into L-xylulose-5-P. The polypeptide is Probable 3-keto-L-gulonate-6-phosphate decarboxylase (sgbH) (Haemophilus influenzae (strain ATCC 51907 / DSM 11121 / KW20 / Rd)).